A 235-amino-acid chain; its full sequence is Ubiquinone biosynthesis O-methyltransferase (235 aa).

Arg-40, Gly-60, Asp-81, and Met-125 together coordinate S-adenosyl-L-methionine.

It belongs to the methyltransferase superfamily. UbiG/COQ3 family.

It carries out the reaction a 3-demethylubiquinol + S-adenosyl-L-methionine = a ubiquinol + S-adenosyl-L-homocysteine + H(+). The catalysed reaction is a 3-(all-trans-polyprenyl)benzene-1,2-diol + S-adenosyl-L-methionine = a 2-methoxy-6-(all-trans-polyprenyl)phenol + S-adenosyl-L-homocysteine + H(+). It functions in the pathway cofactor biosynthesis; ubiquinone biosynthesis. Functionally, O-methyltransferase that catalyzes the 2 O-methylation steps in the ubiquinone biosynthetic pathway. This Nitrosomonas europaea (strain ATCC 19718 / CIP 103999 / KCTC 2705 / NBRC 14298) protein is Ubiquinone biosynthesis O-methyltransferase.